The sequence spans 207 residues: Segregation and condensation protein B (207 aa).

The segment at 173-207 is disordered; sequence DDTAESDNDSADLYYRQFEQTLNETGPETAPKGEQ.

It belongs to the ScpB family. Homodimer. Homodimerization may be required to stabilize the binding of ScpA to the Smc head domains. Component of a cohesin-like complex composed of ScpA, ScpB and the Smc homodimer, in which ScpA and ScpB bind to the head domain of Smc. The presence of the three proteins is required for the association of the complex with DNA.

The protein localises to the cytoplasm. Its function is as follows. Participates in chromosomal partition during cell division. May act via the formation of a condensin-like complex containing Smc and ScpA that pull DNA away from mid-cell into both cell halves. This chain is Segregation and condensation protein B, found in Latilactobacillus sakei subsp. sakei (strain 23K) (Lactobacillus sakei subsp. sakei).